Reading from the N-terminus, the 296-residue chain is 4-hydroxy-tetrahydrodipicolinate synthase (296 aa).

Threonine 49 lines the pyruvate pocket. Residue tyrosine 137 is the Proton donor/acceptor of the active site. The Schiff-base intermediate with substrate role is filled by lysine 165. Isoleucine 207 is a binding site for pyruvate.

Belongs to the DapA family. In terms of assembly, homotetramer; dimer of dimers.

It localises to the cytoplasm. The enzyme catalyses L-aspartate 4-semialdehyde + pyruvate = (2S,4S)-4-hydroxy-2,3,4,5-tetrahydrodipicolinate + H2O + H(+). It functions in the pathway amino-acid biosynthesis; L-lysine biosynthesis via DAP pathway; (S)-tetrahydrodipicolinate from L-aspartate: step 3/4. Its function is as follows. Catalyzes the condensation of (S)-aspartate-beta-semialdehyde [(S)-ASA] and pyruvate to 4-hydroxy-tetrahydrodipicolinate (HTPA). The chain is 4-hydroxy-tetrahydrodipicolinate synthase from Rhodopseudomonas palustris (strain BisA53).